The following is a 297-amino-acid chain: Tyrosine recombinase XerC (297 aa).

The 84-residue stretch at 1-84 folds into the Core-binding (CB) domain; it reads MEEIQVTFLN…TLRTFYEFWM (84 aa). The Tyr recombinase domain maps to 105-286; that stretch reads YLPQFFYEEE…SNQQLRKVYL (182 aa). Active-site residues include arginine 145, lysine 169, histidine 238, arginine 241, and histidine 264. The O-(3'-phospho-DNA)-tyrosine intermediate role is filled by tyrosine 273.

The protein belongs to the 'phage' integrase family. XerC subfamily. As to quaternary structure, forms a cyclic heterotetrameric complex composed of two molecules of XerC and two molecules of XerD.

The protein localises to the cytoplasm. In terms of biological role, site-specific tyrosine recombinase, which acts by catalyzing the cutting and rejoining of the recombining DNA molecules. The XerC-XerD complex is essential to convert dimers of the bacterial chromosome into monomers to permit their segregation at cell division. It also contributes to the segregational stability of plasmids. The protein is Tyrosine recombinase XerC of Staphylococcus haemolyticus (strain JCSC1435).